A 195-amino-acid chain; its full sequence is ATP-dependent Clp protease proteolytic subunit 2 (195 aa).

S92 serves as the catalytic Nucleophile. H117 is an active-site residue.

Belongs to the peptidase S14 family. As to quaternary structure, fourteen ClpP subunits assemble into 2 heptameric rings which stack back to back to give a disk-like structure with a central cavity, resembling the structure of eukaryotic proteasomes.

The protein localises to the cytoplasm. The catalysed reaction is Hydrolysis of proteins to small peptides in the presence of ATP and magnesium. alpha-casein is the usual test substrate. In the absence of ATP, only oligopeptides shorter than five residues are hydrolyzed (such as succinyl-Leu-Tyr-|-NHMec, and Leu-Tyr-Leu-|-Tyr-Trp, in which cleavage of the -Tyr-|-Leu- and -Tyr-|-Trp bonds also occurs).. Its function is as follows. Cleaves peptides in various proteins in a process that requires ATP hydrolysis. Has a chymotrypsin-like activity. Plays a major role in the degradation of misfolded proteins. The polypeptide is ATP-dependent Clp protease proteolytic subunit 2 (Rhodococcus jostii (strain RHA1)).